We begin with the raw amino-acid sequence, 307 residues long: Ubiquitin recognition factor in ER-associated degradation protein 1 (307 aa).

M1 carries the N-acetylmethionine modification. A phosphoserine mark is found at S129, S231, S245, S247, and S299. Disordered stretches follow at residues 231–256 (SGNR…DIKR) and 288–307 (GRFV…GRKP).

The protein belongs to the UFD1 family. In terms of assembly, heterodimer with NPLOC4, this heterodimer binds VCP and inhibits Golgi membrane fusion. Interacts with USP13. Interacts with ZFAND2B; probably through VCP. In terms of tissue distribution, found in adult heart, skeletal muscle and pancreas, and in fetal liver and kidney.

Its subcellular location is the nucleus. It is found in the cytoplasm. It localises to the cytosol. It participates in protein degradation; proteasomal ubiquitin-dependent pathway. Its function is as follows. Essential component of the ubiquitin-dependent proteolytic pathway which degrades ubiquitin fusion proteins. The ternary complex containing UFD1, VCP and NPLOC4 binds ubiquitinated proteins and is necessary for the export of misfolded proteins from the ER to the cytoplasm, where they are degraded by the proteasome. The NPLOC4-UFD1-VCP complex regulates spindle disassembly at the end of mitosis and is necessary for the formation of a closed nuclear envelope. It may be involved in the development of some ectoderm-derived structures. Acts as a negative regulator of type I interferon production via the complex formed with VCP and NPLOC4, which binds to RIGI and recruits RNF125 to promote ubiquitination and degradation of RIGI. This is Ubiquitin recognition factor in ER-associated degradation protein 1 from Homo sapiens (Human).